The following is a 100-amino-acid chain: DNA base-flipping protein (100 aa).

The protein belongs to the MGMT family. ATL subfamily.

In terms of biological role, involved in DNA damage recognition. Binds DNA containing O(6)-methylguanine. Binds to the damaged base and flips the base out of the DNA duplex into an extrahelical conformation, which allows processing by repair proteins. The protein is DNA base-flipping protein of Vibrio parahaemolyticus serotype O3:K6 (strain AQ3810).